Here is a 249-residue protein sequence, read N- to C-terminus: Small ribosomal subunit protein uS2 (249 aa).

This sequence belongs to the universal ribosomal protein uS2 family.

This Bordetella avium (strain 197N) protein is Small ribosomal subunit protein uS2.